The sequence spans 549 residues: DNA mismatch repair protein MutL (549 aa).

This sequence belongs to the DNA mismatch repair MutL/HexB family.

In terms of biological role, this protein is involved in the repair of mismatches in DNA. It is required for dam-dependent methyl-directed DNA mismatch repair. May act as a 'molecular matchmaker', a protein that promotes the formation of a stable complex between two or more DNA-binding proteins in an ATP-dependent manner without itself being part of a final effector complex. This chain is DNA mismatch repair protein MutL, found in Pseudothermotoga lettingae (strain ATCC BAA-301 / DSM 14385 / NBRC 107922 / TMO) (Thermotoga lettingae).